Consider the following 363-residue polypeptide: Chalcone synthase B (363 aa).

Residue Cys170 is part of the active site.

It belongs to the thiolase-like superfamily. Chalcone/stilbene synthases family.

It catalyses the reaction (E)-4-coumaroyl-CoA + 3 malonyl-CoA + 3 H(+) = 2',4,4',6'-tetrahydroxychalcone + 3 CO2 + 4 CoA. It participates in secondary metabolite biosynthesis; flavonoid biosynthesis. Functionally, the primary product of this enzyme is 4,2',4',6'-tetrahydroxychalcone (also termed naringenin-chalcone or chalcone) which can under specific conditions spontaneously isomerize into naringenin. The chain is Chalcone synthase B (CHSB) from Ipomoea cordatotriloba (Tievine).